We begin with the raw amino-acid sequence, 459 residues long: Biphenyl dioxygenase subunit alpha (459 aa).

In terms of domain architecture, Rieske spans Trp-58–Ala-156. Residues Cys-100, His-102, Cys-120, and His-123 each contribute to the [2Fe-2S] cluster site. Positions 233 and 239 each coordinate Fe cation.

The protein belongs to the bacterial ring-hydroxylating dioxygenase alpha subunit family. Heterohexamer consisting of three BphA subunits and three BphE subunits. A ferredoxin (BphF) and a ferredoxin reductase (BphG) must be present to obtain activity. Requires [2Fe-2S] cluster as cofactor. Fe cation serves as cofactor.

The catalysed reaction is biphenyl + NADH + O2 + H(+) = (2R,3S)-3-phenylcyclohexa-3,5-diene-1,2-diol + NAD(+). It functions in the pathway xenobiotic degradation; biphenyl degradation; 2-hydroxy-2,4-pentadienoate and benzoate from biphenyl: step 1/4. This Paraburkholderia xenovorans (strain LB400) protein is Biphenyl dioxygenase subunit alpha (bphA).